An 859-amino-acid polypeptide reads, in one-letter code: Bifunctional levopimaradiene synthase, chloroplastic (859 aa).

Residues M1 to R52 constitute a chloroplast transit peptide. Mg(2+) contacts are provided by D392, D394, D611, D615, N755, and E763. The DXDD motif signature appears at D392–D395. Positions D611 to D615 match the DDXXD motif motif.

The protein belongs to the terpene synthase family. Tpsd subfamily. The cofactor is Mg(2+). It depends on Mn(2+) as a cofactor.

The protein localises to the plastid. It localises to the chloroplast. The enzyme catalyses (+)-copalyl diphosphate = abieta-8(14),12-diene + diphosphate. It catalyses the reaction (+)-copalyl diphosphate = abieta-7,13-diene + diphosphate. It participates in secondary metabolite biosynthesis; terpenoid biosynthesis. The protein operates within terpene metabolism; oleoresin biosynthesis. In terms of biological role, terpene synthase (di-TPS) involved in the biosynthesis of diterpene natural products included in conifer oleoresin secretions and volatile emissions; these compounds contribute to biotic and abiotic stress defense against herbivores and pathogens. Catalyzes the conversion of (+)-copalyl diphosphate ((+)-CPP) to isopimaradiene. The chain is Bifunctional levopimaradiene synthase, chloroplastic from Picea sitchensis (Sitka spruce).